A 158-amino-acid chain; its full sequence is MMRHRNRRLATIAASAIVLVVAVGLGLMALRSAVVFFYSPSEIAAEHPGIEARIRVGGLVLEESVGEAASGATRFVITDRVENVQVEYAGLLPDLFREGQGVVVEGRFAADGVLQARTVLAKHDETYMPPEVAEALREAGVWQGEGETPSAAGDGDSR.

Over 1 to 8 (MMRHRNRR) the chain is Cytoplasmic. A helical; Signal-anchor for type II membrane protein transmembrane segment spans residues 9-29 (LATIAASAIVLVVAVGLGLMA). Topologically, residues 30 to 158 (LRSAVVFFYS…PSAAGDGDSR (129 aa)) are periplasmic. Heme contacts are provided by histidine 123 and tyrosine 127. A disordered region spans residues 139 to 158 (AGVWQGEGETPSAAGDGDSR).

It belongs to the CcmE/CycJ family.

The protein resides in the cell inner membrane. Its function is as follows. Heme chaperone required for the biogenesis of c-type cytochromes. Transiently binds heme delivered by CcmC and transfers the heme to apo-cytochromes in a process facilitated by CcmF and CcmH. The chain is Cytochrome c-type biogenesis protein CcmE from Maricaulis maris (strain MCS10) (Caulobacter maris).